The primary structure comprises 357 residues: MPFLGQDWRSPGWSWIKTEDGWKRCDPCSHEIRSEDNQYPVNHSIILNSGEEEIFNNDCEYAAKKRKKQHFGNDTAAHSFYREKWIYVHKESTKERHGYCTLGEAFNRLDFSSAIQDIRRFTYVVKLLQLIAKSQLTSLSGVAQKNYFNILDKIVQKVLDDHQNPRLIKDLLQDLSSTLCILVRGVGKSVLVGNINIWICRLETVLNWQEKLQNLQMTKQVNTGLTLSDLPLHMLNNILYRFSDGWDIVTLGQVTPTLYMLSEDRRLWKRLCQYHFAEKQFCRHLILSEKGHIEWKLMYFTLQKYYPTKEQYGDTLHFCRHCSILFWKDSGHPCTAADPDSCFTPVSPEHFIDLFKF.

The interaction with beta-actin stretch occupies residues 1–83 (MPFLGQDWRS…DTAAHSFYRE (83 aa)). In terms of domain architecture, F-box spans 224 to 271 (GLTLSDLPLHMLNNILYRFSDGWDIVTLGQVTPTLYMLSEDRRLWKRL).

Part of a SCF (SKP1-cullin-F-box) protein ligase complex consisting of FBXO25, SKP1, CUL1 and RBX1. Interacts directly with SKP1 and CUL1. Interacts (via C-terminus) with actin (via N-terminus).

The protein resides in the nucleus. Its pathway is protein modification; protein ubiquitination. In terms of biological role, substrate-recognition component of the SCF (SKP1-CUL1-F-box protein)-type E3 ubiquitin ligase complex. May play a role in accumulation of expanded polyglutamine (polyQ) protein huntingtin (HTT). The polypeptide is F-box only protein 25 (Fbxo25) (Rattus norvegicus (Rat)).